A 468-amino-acid chain; its full sequence is UDP-N-acetylmuramate--L-alanine ligase (468 aa).

122-128 (GSHGKTT) serves as a coordination point for ATP.

It belongs to the MurCDEF family.

It is found in the cytoplasm. The enzyme catalyses UDP-N-acetyl-alpha-D-muramate + L-alanine + ATP = UDP-N-acetyl-alpha-D-muramoyl-L-alanine + ADP + phosphate + H(+). It participates in cell wall biogenesis; peptidoglycan biosynthesis. Functionally, cell wall formation. This is UDP-N-acetylmuramate--L-alanine ligase from Synechococcus sp. (strain CC9902).